Consider the following 130-residue polypeptide: Small ribosomal subunit protein uS9 (130 aa).

It belongs to the universal ribosomal protein uS9 family.

This Bacillus thuringiensis subsp. konkukian (strain 97-27) protein is Small ribosomal subunit protein uS9.